The chain runs to 829 residues: Outer dense fiber protein 2 (829 aa).

A phosphoserine mark is found at Ser-73 and Ser-74. Thr-92 carries the post-translational modification Phosphothreonine. Ser-95 is subject to Phosphoserine; by TSSK4. Phosphoserine occurs at positions 106 and 109. Phosphothreonine is present on Thr-110. Ser-115 and Ser-129 each carry phosphoserine. Lys-138 is covalently cross-linked (Glycyl lysine isopeptide (Lys-Gly) (interchain with G-Cter in SUMO2)). Phosphoserine is present on Ser-139. Residues 144 to 217 (QKGERQMAKR…MSKLVEAEMD (74 aa)) are a coiled coil. Residue Thr-231 is modified to Phosphothreonine. Coiled coils occupy residues 245–423 (DINT…AEQL) and 461–798 (EIIV…NYVQ). The residue at position 261 (Ser-261) is a Phosphoserine. The segment at 392–413 (KQKGDRDKESLKKAIRAQKERA) is disordered. Residues 537–701 (KNYEGMIDNY…EAIHQSQLRL (165 aa)) form an interaction with BBOF1 region. The residue at position 632 (Ser-632) is a Phosphoserine.

It belongs to the ODF2 family. In terms of assembly, self-associates. Associates with microtubules and forms a fibrillar structure partially linked to the microtubule network. Interacts via its C-terminus with PLK1. Interacts with ODF1. Interacts with MARK4; the interaction is required for localization of ODF2 to centrioles. Interacts with TSSK4. Interacts with AKNA. Interacts with QRICH2. Interacts with CFAP58. Interacts with BBOF1. Interacts with CCDC38. Interacts with CCDC42. Post-translationally, tyrosine phosphorylated. Phosphorylated by TSSK4 on Ser-95. Testis-specific (at protein level). Highly expressed in cytoplasm of step 2 round spermatids. Detected in the middle piece and extends to about half the principal piece of the sperm tails.

The protein resides in the cytoplasm. It localises to the cytoskeleton. It is found in the microtubule organizing center. Its subcellular location is the centrosome. The protein localises to the cell projection. The protein resides in the cilium. It localises to the centriole. It is found in the spindle pole. Its subcellular location is the flagellum. Its function is as follows. Seems to be a major component of sperm tail outer dense fibers (ODF). ODFs are filamentous structures located on the outside of the axoneme in the midpiece and principal piece of the mammalian sperm tail and may help to maintain the passive elastic structures and elastic recoil of the sperm tail. May have a modulating influence on sperm motility. Functions as a general scaffold protein that is specifically localized at the distal/subdistal appendages of mother centrioles. Component of the centrosome matrix required for the localization of PLK1 and NIN to the centrosomes. Required for the formation and/or maintenance of normal CETN1 assembly. This Homo sapiens (Human) protein is Outer dense fiber protein 2 (ODF2).